The chain runs to 1470 residues: MYSSSNSFLGGVNNARPGQPPFMQQPPYSQFPQGQQQIPQQTGFQPQPAGYGPQSASHLQPQPTGFPTGQLQPQFTGFPGAAPQQQQQQLGGYQAPAQQPQFTGYPPQSQPPSLQVPSTTGLPTRLAPRTSSEIANSFSDGAGVAPPPPPKSSGSKIPNIRLSFITAQDQAKFEQLFKSAVGDSQTMDGEKAKELLLRSRLPGSELSKIWVLSDTTKSGQLFFPEFALAMYLCNLRITGRELPATLPDKIKNEVSSMVDIISFGVPDTEPQASARTNVPSFDAPLLENKSAPPAPQHPKPQQPSNAQFLSQLAAQPTGFGPQATGLQPNQPSLLGANAALAPQATGFPGQSQQQYLQPQPTGLMTNPQATGYNGPRPPLPPMPTGFGSNLSSMQTGGLVAQPTGIPGQWGFVNAPSSGLPNIEALKQQLMPQPGREGGFTTAGLSGNASIPWAITKEEKKIYDDLFRAWDGFHKGFIGGDTAIEIMGQSGLDRKDLERIWTLADPNNRGRLNMDEFAVAMHLIYRKLNGYPVPNRLPPELIPPSTRNLNDSIGAVKSLLSQDAENRKASGAFLQPQKTGVSYLKEHSFRGGARSPGFGRKDATLFKNNDEAAAGYRSSARRRMGNDARPSSPAASQASEEELSVEQLKKKIRETQIMLDAVDFNDENRAEEDEVLDRRDRLEAESLMDRTRRVQDDIDTHPNAAFRNLDNGAERRALRRQLQAFEDQVPQVASEVRRIEREIADAKLELFRLKDAKAHPNSAANIVGTGPGGTVTEADRIKARARARMQARAAELAGRPVPASVDDDGAAARRLEAESTSIRADREKNEAMTRDVEESVREFTRSLEDSLKEEGETSTREHERRRWEDALGVEDVIRDFIYDLQRGSRTAHVRKEEESRASEQRLRHEEPSAGVSRLSPAPSAGSAGSLPGSTHEDRVAAARERAQRRIAERMAAAGLKPHTDTSETLLQRQEREKREREERLRQAEEEDAKREQERQRRLAEEQRSTSNAPAKPVGKKPPPAPPSRRGRTDSAGQAEVKKAAEETVTAEQAAREQAIREEQQAQEEETNRLEMEAQQREEELLKEKEAQEARLRALEEQVRQGKIRKQEEKRRKEEAERLAKEKEAALAAQRAEIERAKERERQLQLELEGLDEESSSDDEGPANITPEDSTPTQSQLLPTVTPAAPVSAPESEQAGSPEDTSSQAPPVGFSSETESKNPYFKITHQAADTQVVSPPPAPQPNVTSPRADVHSTNPFHRLAQQESSKPVFTGSAPLERKSRARPEADDDWSAAGSEFDSSDDDDDERPGGGSAKQLASILFGTMAPPRPLSAMDDKSPSKSSTPVQDSPVTSLPVPEPNGSLSAPAAPPPPPPPPPPAAVPSYDSSVAPPPPPAPPMAPPMAPPAPPPGPPPPPGPPPPPAPPAAGGPPTPAGAPDRSALLASIQMGKGLRKVQTNDRSTSSSAGRVLD.

A disordered region spans residues 1 to 157 (MYSSSNSFLG…PPPKSSGSKI (157 aa)). Over residues 25-48 (QPPYSQFPQGQQQIPQQTGFQPQP) the composition is skewed to low complexity. Polar residues predominate over residues 54–75 (QSASHLQPQPTGFPTGQLQPQF). The span at 77–101 (GFPGAAPQQQQQQLGGYQAPAQQPQ) shows a compositional bias: low complexity. Residues 129-139 (RTSSEIANSFS) show a composition bias toward polar residues. The region spanning 169–257 (DQAKFEQLFK…DKIKNEVSSM (89 aa)) is the EH 1 domain. Residues 201 to 236 (LPGSELSKIWVLSDTTKSGQLFFPEFALAMYLCNLR) form the EF-hand 1 domain. Disordered regions lie at residues 282–305 (DAPL…QPSN) and 343–377 (QATG…GPRP). The span at 292–301 (PPAPQHPKPQ) shows a compositional bias: pro residues. The segment covering 348–360 (PGQSQQQYLQPQP) has biased composition (low complexity). Residues 458–547 (EKKIYDDLFR…PELIPPSTRN (90 aa)) enclose the EH 2 domain. An EF-hand 2 domain is found at 491–526 (LDRKDLERIWTLADPNNRGRLNMDEFAVAMHLIYRK). Disordered regions lie at residues 614–641 (GYRS…SEEE), 794–864 (ELAG…HERR), 886–1087 (GSRT…LKEK), and 1099–1470 (EQVR…RVLD). Residues 627 to 637 (ARPSSPAASQA) are compositionally biased toward low complexity. Residues 633–758 (AASQASEEEL…LFRLKDAKAH (126 aa)) are a coiled coil. Composition is skewed to basic and acidic residues over residues 809 to 864 (AAAR…HERR) and 892 to 910 (VRKE…HEEP). Low complexity predominate over residues 917–932 (LSPAPSAGSAGSLPGS). Basic and acidic residues-rich tracts occupy residues 933-951 (THED…RIAE), 971-1006 (RQER…EEQR), 1052-1087 (AARE…LKEK), 1099-1127 (EQVR…EKEA), and 1134-1146 (AEIE…ERQL). A coiled-coil region spans residues 963–1159 (DTSETLLQRQ…LEGLDEESSS (197 aa)). Residues 1151-1163 (EGLDEESSSDDEG) are compositionally biased toward acidic residues. Residues 1169–1180 (PEDSTPTQSQLL) are compositionally biased toward polar residues. The segment covering 1181-1195 (PTVTPAAPVSAPESE) has biased composition (low complexity). Positions 1243-1269 (PNVTSPRADVHSTNPFHRLAQQESSKP) are enriched in polar residues. Basic and acidic residues predominate over residues 1277–1286 (LERKSRARPE). Polar residues predominate over residues 1340–1352 (SKSSTPVQDSPVT). 2 stretches are compositionally biased toward pro residues: residues 1367–1380 (AAPP…PPAA) and 1389–1433 (APPP…PTPA). One can recognise a WH2 domain in the interval 1437–1454 (DRSALLASIQMGKGLRKV). A compositionally biased stretch (polar residues) spans 1457 to 1470 (NDRSTSSSAGRVLD).

The protein belongs to the PAN1 family. Component of the PAN1 actin cytoskeleton-regulatory complex.

The protein localises to the cell membrane. It localises to the endosome membrane. It is found in the cytoplasm. The protein resides in the cytoskeleton. Its subcellular location is the actin patch. In terms of biological role, component of the PAN1 actin cytoskeleton-regulatory complex required for the internalization of endosomes during actin-coupled endocytosis. The complex links the site of endocytosis to the cell membrane-associated actin cytoskeleton. Mediates uptake of external molecules and vacuolar degradation of plasma membrane proteins. Plays a role in the proper organization of the cell membrane-associated actin cytoskeleton and promotes its destabilization. The sequence is that of Actin cytoskeleton-regulatory complex protein pan1 (pan1) from Neosartorya fischeri (strain ATCC 1020 / DSM 3700 / CBS 544.65 / FGSC A1164 / JCM 1740 / NRRL 181 / WB 181) (Aspergillus fischerianus).